The chain runs to 263 residues: 3'-5' ssDNA/RNA exonuclease TatD (263 aa).

Residues Glu-92, His-128, and His-153 each contribute to the a divalent metal cation site.

The protein belongs to the metallo-dependent hydrolases superfamily. TatD-type hydrolase family. TatD subfamily. In terms of assembly, monomer. The cofactor is Mg(2+).

Its subcellular location is the cytoplasm. Functionally, 3'-5' exonuclease that prefers single-stranded DNA and RNA. May play a role in the H(2)O(2)-induced DNA damage repair. The sequence is that of 3'-5' ssDNA/RNA exonuclease TatD from Rahnella sp. (strain Y9602).